Here is an 88-residue protein sequence, read N- to C-terminus: Three-finger toxin 3FTx-2 (88 aa).

The N-terminal stretch at 1 to 21 is a signal peptide; sequence MKTLLLTLVVVTIVCLDLGNT. Disulfide bonds link C27–C48, C41–C66, C70–C81, and C82–C87.

The protein belongs to the three-finger toxin family. Ancestral subfamily. Orphan group II sub-subfamily. Expressed by the venom gland.

The protein localises to the secreted. In terms of biological role, binds with low affinity to muscular (alpha-1-beta-1-delta-epsilon/CHRNA1-CHRNB1-CHRND-CHRNE) and very low affinity to neuronal (alpha-7/CHRNA7) nicotinic acetylcholine receptor (nAChR). The protein is Three-finger toxin 3FTx-2 of Micrurus corallinus (Brazilian coral snake).